Consider the following 234-residue polypeptide: Probable chemoreceptor glutamine deamidase CheD (234 aa).

This sequence belongs to the CheD family.

It carries out the reaction L-glutaminyl-[protein] + H2O = L-glutamyl-[protein] + NH4(+). Probably deamidates glutamine residues to glutamate on methyl-accepting chemotaxis receptors (MCPs), playing an important role in chemotaxis. This is Probable chemoreceptor glutamine deamidase CheD from Burkholderia pseudomallei (strain 1710b).